The chain runs to 774 residues: Subtilisin-like protease SBT3.5 (774 aa).

Positions 1 to 23 (MRNCRVLLVLVLSLVIVLNVVRA) are cleaved as a signal peptide. The propeptide at 24–108 (SDESKVHIVY…VMADSFYELA (85 aa)) is removed in mature form. The 80-residue stretch at 29-108 (VHIVYLGEKQ…VMADSFYELA (80 aa)) folds into the Inhibitor I9 domain. The 510-residue stretch at 112–621 (TWDYLGLSVA…GGIVNPEKAA (510 aa)) folds into the Peptidase S8 domain. Asn128 is a glycosylation site (N-linked (GlcNAc...) asparagine). Asp142 functions as the Charge relay system in the catalytic mechanism. Residue Asn201 is glycosylated (N-linked (GlcNAc...) asparagine). The active-site Charge relay system is His217. Residues Asn232, Asn394, Asn409, and Asn539 are each glycosylated (N-linked (GlcNAc...) asparagine). The 96-residue stretch at 383–478 (SLVYPENAGF…ELGTDVLLYI (96 aa)) folds into the PA domain. The Charge relay system role is filled by Ser552. N-linked (GlcNAc...) asparagine glycosylation is found at Asn644, Asn654, Asn725, and Asn755.

The protein belongs to the peptidase S8 family. Expressed in roots, leaves, stems, flower buds, developing siliques and mature seeds.

The protein resides in the secreted. It is found in the cell wall. In terms of biological role, serine protease that cleaves the pectin methylesterase 17 (PME17) protein to release the PME17 mature form in the apoplasm. The polypeptide is Subtilisin-like protease SBT3.5 (Arabidopsis thaliana (Mouse-ear cress)).